Reading from the N-terminus, the 75-residue chain is Protein Tlp homolog (75 aa).

Residues Arg-52 to Met-75 form a disordered region.

It belongs to the Tlp family.

This is Protein Tlp homolog from Clostridium botulinum (strain Okra / Type B1).